Here is a 165-residue protein sequence, read N- to C-terminus: 3-isopropylmalate dehydratase small subunit (165 aa).

It belongs to the LeuD family. LeuD type 2 subfamily. Heterodimer of LeuC and LeuD.

It catalyses the reaction (2R,3S)-3-isopropylmalate = (2S)-2-isopropylmalate. Its pathway is amino-acid biosynthesis; L-leucine biosynthesis; L-leucine from 3-methyl-2-oxobutanoate: step 2/4. In terms of biological role, catalyzes the isomerization between 2-isopropylmalate and 3-isopropylmalate, via the formation of 2-isopropylmaleate. The sequence is that of 3-isopropylmalate dehydratase small subunit from Saccharolobus islandicus (strain M.16.27) (Sulfolobus islandicus).